The following is a 372-amino-acid chain: Formylglycine-generating enzyme (372 aa).

The signal sequence occupies residues 1 to 31 (MAAPAREPALRCCIRLARVFLLLVLACEVAG). The cysteines at positions 48 and 50 are disulfide-linked. The segment at 61-80 (SSAAAQRYSREANAPGLTSG) is disordered. E128 contributes to the Ca(2+) binding site. A glycan (N-linked (GlcNAc...) asparagine) is linked at N139. 2 disulfides stabilise this stretch: C216/C363 and C233/C344. Ca(2+) is bound by residues N257, I258, D271, F273, N291, G294, and E298. Cu(2+) is bound by residues C334 and C339. The interval 339-358 (CYRYRCAARSQNTPDSSASN) is interaction with sulfatases.

It belongs to the sulfatase-modifying factor family. As to quaternary structure, monomer, homodimer and heterodimer with SUMF2. It depends on Cu(2+) as a cofactor. N-glycosylated. Contains high-mannose-type oligosaccharides.

Its subcellular location is the endoplasmic reticulum lumen. The catalysed reaction is L-cysteinyl-[sulfatase] + 2 a thiol + O2 = an organic disulfide + 3-oxo-L-alanyl-[sulfatase] + hydrogen sulfide + H2O + H(+). Its pathway is protein modification; sulfatase oxidation. Its function is as follows. Oxidase that catalyzes the conversion of cysteine to 3-oxoalanine on target proteins, using molecular oxygen and an unidentified reducing agent. 3-oxoalanine modification, which is also named formylglycine (fGly), occurs in the maturation of arylsulfatases and some alkaline phosphatases that use the hydrated form of 3-oxoalanine as a catalytic nucleophile. Known substrates include GALNS, ARSA, STS and ARSE. The chain is Formylglycine-generating enzyme from Mus musculus (Mouse).